We begin with the raw amino-acid sequence, 395 residues long: Acetylornithine aminotransferase (395 aa).

Pyridoxal 5'-phosphate is bound by residues 117-118 (GA) and Phe144. Arg147 is a N(2)-acetyl-L-ornithine binding site. A pyridoxal 5'-phosphate-binding site is contributed by 230–233 (DEVQ). Lys259 bears the N6-(pyridoxal phosphate)lysine mark. Ser285 serves as a coordination point for N(2)-acetyl-L-ornithine. Position 286 (Thr286) interacts with pyridoxal 5'-phosphate.

This sequence belongs to the class-III pyridoxal-phosphate-dependent aminotransferase family. ArgD subfamily. In terms of assembly, homodimer. Pyridoxal 5'-phosphate is required as a cofactor.

It is found in the cytoplasm. It carries out the reaction N(2)-acetyl-L-ornithine + 2-oxoglutarate = N-acetyl-L-glutamate 5-semialdehyde + L-glutamate. Its pathway is amino-acid biosynthesis; L-arginine biosynthesis; N(2)-acetyl-L-ornithine from L-glutamate: step 4/4. The protein is Acetylornithine aminotransferase of Methanosarcina mazei (strain ATCC BAA-159 / DSM 3647 / Goe1 / Go1 / JCM 11833 / OCM 88) (Methanosarcina frisia).